Consider the following 186-residue polypeptide: Lipid A palmitoyltransferase PagP (186 aa).

The first 25 residues, 1–25 (MNVSKYVAIFSFVFIQLISVGKVFA), serve as a signal peptide directing secretion. Residues His-58, Asp-101, and Ser-102 contribute to the active site.

Belongs to the lipid A palmitoyltransferase family. As to quaternary structure, homodimer.

It is found in the cell outer membrane. It carries out the reaction lipid A (E. coli) + a 1-hexadecanoyl-2-acyl-sn-glycero-3-phosphocholine = hepta-acyl lipid A (E. coli) + a 2-acyl-sn-glycero-3-phosphocholine. The enzyme catalyses lipid IIA + a 1-hexadecanoyl-2-acyl-sn-glycero-3-phosphocholine = lipid IIB + a 2-acyl-sn-glycero-3-phosphocholine. The catalysed reaction is lipid IVA (E. coli) + a 1-hexadecanoyl-2-acyl-sn-glycero-3-phosphocholine = lipid IVB (E. coli) + a 2-acyl-sn-glycero-3-phosphocholine. With respect to regulation, inhibited by lauryldimethylamine oxide (LDAO) and dodecylphosphocholine (DPC). In terms of biological role, transfers a palmitate residue from the sn-1 position of a phospholipid to the N-linked hydroxymyristate on the proximal unit of lipid A or its precursors. Phosphatidylglycerol (PtdGro), phosphatidylethanolamine (PtdEtn), phosphatidylserine (PtdSer) and phosphatidic acid (Ptd-OH) are all effective acyl donors. This is Lipid A palmitoyltransferase PagP from Escherichia coli (strain K12).